A 376-amino-acid chain; its full sequence is MSSWSNQPAMDDYGLPSSNPYGNFTVVDMAPKDILHMIHPHWYQYPPMNPMMYPLLLIFMLFTGILCLAGNFVTIWVFMNTKSLRTPANLLVVNLAMSDFLMMFTMFPPMMVTCYYHTWTLGPTFCQVYAFLGNLCGCASIWTMVFITFDRYNVIVKGVAGEPLSTKKASLWILTIWVLSITWCIAPFFGWNRYVPEGNLTGCGTDYLSEDILSRSYLYDYSTWVYYLPLLPIYCYVSIIKAVAAHEKGMRDQAKKMGIKSLRNEEAQKTSAECRLAKIAMTTVALWFIAWTPYLLINWVGMFARSYLSPVYTIWGYVFAKANAVYNPIVYAISHPKYRAAMEKKLPCLSCKTESDDVSESASTTTSSAEEKAESA.

Residues 1-52 are Extracellular-facing; the sequence is MSSWSNQPAMDDYGLPSSNPYGNFTVVDMAPKDILHMIHPHWYQYPPMNPMM. Asparagine 23 is a glycosylation site (N-linked (GlcNAc...) asparagine). Residues 53–77 form a helical membrane-spanning segment; it reads YPLLLIFMLFTGILCLAGNFVTIWV. Topologically, residues 78 to 89 are cytoplasmic; sequence FMNTKSLRTPAN. Residues 90–112 traverse the membrane as a helical segment; sequence LLVVNLAMSDFLMMFTMFPPMMV. At 113–126 the chain is on the extracellular side; that stretch reads TCYYHTWTLGPTFC. An intrachain disulfide couples cysteine 126 to cysteine 203. A helical membrane pass occupies residues 127-149; that stretch reads QVYAFLGNLCGCASIWTMVFITF. The 'Ionic lock' involved in activated form stabilization motif lies at 150 to 152; it reads DRY. The Cytoplasmic segment spans residues 150–168; that stretch reads DRYNVIVKGVAGEPLSTKK. The helical transmembrane segment at 169–189 threads the bilayer; the sequence is ASLWILTIWVLSITWCIAPFF. At 190–216 the chain is on the extracellular side; that stretch reads GWNRYVPEGNLTGCGTDYLSEDILSRS. Asparagine 199 is a glycosylation site (N-linked (GlcNAc...) asparagine). The chain crosses the membrane as a helical span at residues 217–237; sequence YLYDYSTWVYYLPLLPIYCYV. Over 238–278 the chain is Cytoplasmic; the sequence is SIIKAVAAHEKGMRDQAKKMGIKSLRNEEAQKTSAECRLAK. The helical transmembrane segment at 279 to 300 threads the bilayer; the sequence is IAMTTVALWFIAWTPYLLINWV. Residues 301–311 lie on the Extracellular side of the membrane; sequence GMFARSYLSPV. Residues 312-333 form a helical membrane-spanning segment; that stretch reads YTIWGYVFAKANAVYNPIVYAI. N6-(retinylidene)lysine is present on lysine 321. The Cytoplasmic segment spans residues 334–376; it reads SHPKYRAAMEKKLPCLSCKTESDDVSESASTTTSSAEEKAESA. The tract at residues 353–376 is disordered; sequence TESDDVSESASTTTSSAEEKAESA.

This sequence belongs to the G-protein coupled receptor 1 family. Opsin subfamily. As to quaternary structure, homodimer. Interacts with GNAQ. In terms of processing, contains one covalently linked retinal chromophore. Detected on rhabdomere membranes on photoreceptor cells in the retina (at protein level).

The protein resides in the cell projection. The protein localises to the rhabdomere membrane. Functionally, photoreceptor required for image-forming vision at low light intensity. Can use both retinal and 3-dehydroretinal as visual pigment. Light-induced isomerization of 11-cis to all-trans retinal triggers a conformational change that activates signaling via G-proteins. Signaling via GNAQ probably mediates the activation of phospholipase C. The chain is Rhodopsin (RHO) from Procambarus clarkii (Red swamp crayfish).